Reading from the N-terminus, the 239-residue chain is Pyridoxine 5'-phosphate synthase (239 aa).

Asn-7 contacts 3-amino-2-oxopropyl phosphate. 9-10 (DH) provides a ligand contact to 1-deoxy-D-xylulose 5-phosphate. Arg-18 serves as a coordination point for 3-amino-2-oxopropyl phosphate. His-43 serves as the catalytic Proton acceptor. 1-deoxy-D-xylulose 5-phosphate contacts are provided by Arg-45 and His-50. Glu-70 acts as the Proton acceptor in catalysis. 1-deoxy-D-xylulose 5-phosphate is bound at residue Thr-100. Catalysis depends on His-191, which acts as the Proton donor. Residues Gly-192 and 213–214 (GH) contribute to the 3-amino-2-oxopropyl phosphate site.

This sequence belongs to the PNP synthase family. In terms of assembly, homooctamer; tetramer of dimers.

It is found in the cytoplasm. It catalyses the reaction 3-amino-2-oxopropyl phosphate + 1-deoxy-D-xylulose 5-phosphate = pyridoxine 5'-phosphate + phosphate + 2 H2O + H(+). It participates in cofactor biosynthesis; pyridoxine 5'-phosphate biosynthesis; pyridoxine 5'-phosphate from D-erythrose 4-phosphate: step 5/5. In terms of biological role, catalyzes the complicated ring closure reaction between the two acyclic compounds 1-deoxy-D-xylulose-5-phosphate (DXP) and 3-amino-2-oxopropyl phosphate (1-amino-acetone-3-phosphate or AAP) to form pyridoxine 5'-phosphate (PNP) and inorganic phosphate. This is Pyridoxine 5'-phosphate synthase from Synechococcus sp. (strain JA-2-3B'a(2-13)) (Cyanobacteria bacterium Yellowstone B-Prime).